Here is a 93-residue protein sequence, read N- to C-terminus: Probable Fe(2+)-trafficking protein (93 aa).

The protein belongs to the Fe(2+)-trafficking protein family.

Could be a mediator in iron transactions between iron acquisition and iron-requiring processes, such as synthesis and/or repair of Fe-S clusters in biosynthetic enzymes. In Polaromonas naphthalenivorans (strain CJ2), this protein is Probable Fe(2+)-trafficking protein.